Here is a 398-residue protein sequence, read N- to C-terminus: ORC1-type DNA replication protein 1 (398 aa).

ATP is bound by residues T67–A71, Y208, and R220.

Belongs to the CDC6/cdc18 family.

In terms of biological role, involved in regulation of DNA replication. The sequence is that of ORC1-type DNA replication protein 1 (cdc6-1) from Sulfurisphaera tokodaii (strain DSM 16993 / JCM 10545 / NBRC 100140 / 7) (Sulfolobus tokodaii).